Here is a 476-residue protein sequence, read N- to C-terminus: Cysteine--tRNA ligase (476 aa).

Cysteine 31 contacts Zn(2+). The 'HIGH' region signature appears at 33-43; it reads PTVYNYAHIGN. Residues cysteine 211, histidine 236, and glutamate 240 each coordinate Zn(2+). The short motif at 269-273 is the 'KMSKS' region element; sequence KMSKS. ATP is bound at residue lysine 272.

This sequence belongs to the class-I aminoacyl-tRNA synthetase family. In terms of assembly, monomer. Zn(2+) is required as a cofactor.

It localises to the cytoplasm. The enzyme catalyses tRNA(Cys) + L-cysteine + ATP = L-cysteinyl-tRNA(Cys) + AMP + diphosphate. The protein is Cysteine--tRNA ligase of Xanthomonas euvesicatoria pv. vesicatoria (strain 85-10) (Xanthomonas campestris pv. vesicatoria).